The sequence spans 254 residues: 3-deoxy-manno-octulosonate cytidylyltransferase (254 aa).

This sequence belongs to the KdsB family.

The protein resides in the cytoplasm. The catalysed reaction is 3-deoxy-alpha-D-manno-oct-2-ulosonate + CTP = CMP-3-deoxy-beta-D-manno-octulosonate + diphosphate. It functions in the pathway nucleotide-sugar biosynthesis; CMP-3-deoxy-D-manno-octulosonate biosynthesis; CMP-3-deoxy-D-manno-octulosonate from 3-deoxy-D-manno-octulosonate and CTP: step 1/1. Its pathway is bacterial outer membrane biogenesis; lipopolysaccharide biosynthesis. Functionally, activates KDO (a required 8-carbon sugar) for incorporation into bacterial lipopolysaccharide in Gram-negative bacteria. The chain is 3-deoxy-manno-octulosonate cytidylyltransferase from Haemophilus influenzae (strain PittEE).